Reading from the N-terminus, the 350-residue chain is Anthranilate phosphoribosyltransferase (350 aa).

5-phospho-alpha-D-ribose 1-diphosphate contacts are provided by residues G94, 97–98, T102, 104–107, 122–130, and S134; these read GD, NIST, and KHGNRSVSS. An anthranilate-binding site is contributed by G94. S106 contacts Mg(2+). Residue N125 participates in anthranilate binding. R180 contacts anthranilate. The Mg(2+) site is built by D239 and E240.

The protein belongs to the anthranilate phosphoribosyltransferase family. Homodimer. The cofactor is Mg(2+).

It carries out the reaction N-(5-phospho-beta-D-ribosyl)anthranilate + diphosphate = 5-phospho-alpha-D-ribose 1-diphosphate + anthranilate. The protein operates within amino-acid biosynthesis; L-tryptophan biosynthesis; L-tryptophan from chorismate: step 2/5. Catalyzes the transfer of the phosphoribosyl group of 5-phosphorylribose-1-pyrophosphate (PRPP) to anthranilate to yield N-(5'-phosphoribosyl)-anthranilate (PRA). The sequence is that of Anthranilate phosphoribosyltransferase from Geotalea daltonii (strain DSM 22248 / JCM 15807 / FRC-32) (Geobacter daltonii).